Here is an 89-residue protein sequence, read N- to C-terminus: Small ribosomal subunit protein uS14 (89 aa).

The protein belongs to the universal ribosomal protein uS14 family. Part of the 30S ribosomal subunit. Contacts proteins S3 and S10.

Functionally, binds 16S rRNA, required for the assembly of 30S particles and may also be responsible for determining the conformation of the 16S rRNA at the A site. In Porphyromonas gingivalis (strain ATCC 33277 / DSM 20709 / CIP 103683 / JCM 12257 / NCTC 11834 / 2561), this protein is Small ribosomal subunit protein uS14.